A 95-amino-acid polypeptide reads, in one-letter code: Small ribosomal subunit protein uS17 (95 aa).

The protein belongs to the universal ribosomal protein uS17 family. In terms of assembly, part of the 30S ribosomal subunit.

Functionally, one of the primary rRNA binding proteins, it binds specifically to the 5'-end of 16S ribosomal RNA. The sequence is that of Small ribosomal subunit protein uS17 from Mycoplasmopsis synoviae (strain 53) (Mycoplasma synoviae).